We begin with the raw amino-acid sequence, 82 residues long: Small ribosomal subunit protein uS17 (82 aa).

It belongs to the universal ribosomal protein uS17 family. In terms of assembly, part of the 30S ribosomal subunit.

In terms of biological role, one of the primary rRNA binding proteins, it binds specifically to the 5'-end of 16S ribosomal RNA. This chain is Small ribosomal subunit protein uS17, found in Shewanella woodyi (strain ATCC 51908 / MS32).